Reading from the N-terminus, the 599-residue chain is MERSKIRNFSIIAHIDHGKSTLADRLLETTGALSDREKTNQFLDKLDLERERGITIKAQAVRLKYRAEDGQDYILNLIDTPGHVDFSYEVSRSLAACEGGMLVVDASQGVEAQTLANVYLAIDQNLEVFPVLNKVDLPGAEPARIKEEIEEIIGLDASDAVEASAKEGIGIHEILESIVEKVPAPKGDADAPLKALIFDSWYDSYQGVIMLVRIFDGTLKKGDKIQLMASKRSYEVLKIGAFSPHPVEFSEMAAGEVGFVIAGIKVLQDAKVGDTVTHLHRPAENPLAGFQEVKPMVYSGLYPIDSGDYDALRDAMEKLRLNDSSFSFEPENSLALGFGFRCGFLGLLHMEIIQERLEREFNMELITTAPTVRYRVITTKGEELIVDSANKLPELQYIDQILEPFIVASIHVPNDYVGGVLALCEEKRGIQREIKYLTSNRVMVVYELPLNEIVLDFYDRLKTVSRGYASLDYEFLDYRPSDLVRLNILVNAETVDALSLIVHRDKSQMRGRELVAKMKEFIPRQQYEVAVQAAIGNKVVARANVKALRKDVTAKCYGGDITRKRKLLEKQKEGKKRMKQVGNVELPQEAFLAILKVKE.

The 183-residue stretch at 4 to 186 folds into the tr-type G domain; it reads SKIRNFSIIA…SIVEKVPAPK (183 aa). Residues 16 to 21 and 133 to 136 contribute to the GTP site; these read DHGKST and NKVD.

Belongs to the TRAFAC class translation factor GTPase superfamily. Classic translation factor GTPase family. LepA subfamily.

It localises to the cell inner membrane. The catalysed reaction is GTP + H2O = GDP + phosphate + H(+). In terms of biological role, required for accurate and efficient protein synthesis under certain stress conditions. May act as a fidelity factor of the translation reaction, by catalyzing a one-codon backward translocation of tRNAs on improperly translocated ribosomes. Back-translocation proceeds from a post-translocation (POST) complex to a pre-translocation (PRE) complex, thus giving elongation factor G a second chance to translocate the tRNAs correctly. Binds to ribosomes in a GTP-dependent manner. The chain is Elongation factor 4 from Syntrophotalea carbinolica (strain DSM 2380 / NBRC 103641 / GraBd1) (Pelobacter carbinolicus).